Reading from the N-terminus, the 422-residue chain is Histidine--tRNA ligase (422 aa).

This sequence belongs to the class-II aminoacyl-tRNA synthetase family. As to quaternary structure, homodimer.

It is found in the cytoplasm. It catalyses the reaction tRNA(His) + L-histidine + ATP = L-histidyl-tRNA(His) + AMP + diphosphate + H(+). The chain is Histidine--tRNA ligase from Vibrio cholerae serotype O1 (strain ATCC 39541 / Classical Ogawa 395 / O395).